We begin with the raw amino-acid sequence, 353 residues long: Photosystem II protein D1 (353 aa).

At T2 the chain carries N-acetylthreonine. A Phosphothreonine modification is found at T2. Transmembrane regions (helical) follow at residues 29–46 (YIGW…TATS), 118–133 (HFLL…EWEL), and 142–156 (WIAV…AATA). H118 provides a ligand contact to chlorophyll a. Position 126 (Y126) interacts with pheophytin a. The [CaMn4O5] cluster site is built by D170 and E189. The chain crosses the membrane as a helical span at residues 197 to 218 (FHMLGVAGVFGGSLFSAMHGSL). H198 serves as a coordination point for chlorophyll a. A quinone contacts are provided by residues H215 and 264 to 265 (SF). H215 serves as a coordination point for Fe cation. H272 is a binding site for Fe cation. Residues 274–288 (FLAAWPVVGIWFTAL) traverse the membrane as a helical segment. [CaMn4O5] cluster contacts are provided by H332, E333, D342, and A344. A propeptide spanning residues 345 to 353 (AVEAPSING) is cleaved from the precursor.

It belongs to the reaction center PufL/M/PsbA/D family. In terms of assembly, PSII is composed of 1 copy each of membrane proteins PsbA, PsbB, PsbC, PsbD, PsbE, PsbF, PsbH, PsbI, PsbJ, PsbK, PsbL, PsbM, PsbT, PsbX, PsbY, PsbZ, Psb30/Ycf12, at least 3 peripheral proteins of the oxygen-evolving complex and a large number of cofactors. It forms dimeric complexes. Requires The D1/D2 heterodimer binds P680, chlorophylls that are the primary electron donor of PSII, and subsequent electron acceptors. It shares a non-heme iron and each subunit binds pheophytin, quinone, additional chlorophylls, carotenoids and lipids. D1 provides most of the ligands for the Mn4-Ca-O5 cluster of the oxygen-evolving complex (OEC). There is also a Cl(-1) ion associated with D1 and D2, which is required for oxygen evolution. The PSII complex binds additional chlorophylls, carotenoids and specific lipids. as cofactor. In terms of processing, tyr-161 forms a radical intermediate that is referred to as redox-active TyrZ, YZ or Y-Z. C-terminally processed by CTPA; processing is essential to allow assembly of the oxygen-evolving complex and thus photosynthetic growth.

It localises to the plastid. The protein resides in the chloroplast thylakoid membrane. It catalyses the reaction 2 a plastoquinone + 4 hnu + 2 H2O = 2 a plastoquinol + O2. Its function is as follows. Photosystem II (PSII) is a light-driven water:plastoquinone oxidoreductase that uses light energy to abstract electrons from H(2)O, generating O(2) and a proton gradient subsequently used for ATP formation. It consists of a core antenna complex that captures photons, and an electron transfer chain that converts photonic excitation into a charge separation. The D1/D2 (PsbA/PsbD) reaction center heterodimer binds P680, the primary electron donor of PSII as well as several subsequent electron acceptors. The protein is Photosystem II protein D1 of Chloranthus spicatus (Chulantree).